Here is a 448-residue protein sequence, read N- to C-terminus: Ribosomal protein uS12 methylthiotransferase RimO (448 aa).

An MTTase N-terminal domain is found at 10-120 (PNIGFVSLGC…VMEHVHKYVP (111 aa)). [4Fe-4S] cluster is bound by residues C19, C55, C84, C152, C156, and C159. The Radical SAM core domain maps to 138-379 (LTPKHYAYLK…MELQQQISAQ (242 aa)). In terms of domain architecture, TRAM spans 382-448 (QQKIGKTLPV…ADEYDLWGTC (67 aa)).

The protein belongs to the methylthiotransferase family. RimO subfamily. [4Fe-4S] cluster is required as a cofactor.

It is found in the cytoplasm. The catalysed reaction is L-aspartate(89)-[ribosomal protein uS12]-hydrogen + (sulfur carrier)-SH + AH2 + 2 S-adenosyl-L-methionine = 3-methylsulfanyl-L-aspartate(89)-[ribosomal protein uS12]-hydrogen + (sulfur carrier)-H + 5'-deoxyadenosine + L-methionine + A + S-adenosyl-L-homocysteine + 2 H(+). Its function is as follows. Catalyzes the methylthiolation of an aspartic acid residue of ribosomal protein uS12. The protein is Ribosomal protein uS12 methylthiotransferase RimO of Mannheimia succiniciproducens (strain KCTC 0769BP / MBEL55E).